We begin with the raw amino-acid sequence, 1081 residues long: MKKNQFANKLIVIDLLSVQRESFYSFLTEGLAKELNNFSPIIDYTGKLELHLVTNQLVIKKPKFSFEEAKRRDCSYTISINIVTQLFNKNSGDVKEQEILLGEIPLMTQKGTFVINGAERVIVNQIVRSPGIYFNSEMDKNNLKTFNFLIIPNRGAWLKCEIDKNDLIWIRIDKNKKINLSIFFKALGIDHDDLRIKNAFRQPEFIYKNLNKDENYTQQEALEELHKKLFPGEPATSEASTKILYFKFFNPKKYDLGIVGRKKINKKLDLNSPENIRILTIQDILSGINYLINLKFGFGNIDDIDHLANRRLKSVGELLQSQISIGLIRLERLIKERMTICEQSSLVPSALINPKPIFAAIKEFFNSSQLSQFMDQVNPLAELTHKRRVSSLGPGGLSKERAGFAVRDIHPSHYGRICPIETPEGPNAGLIGSLAIYARINPDGFIEAPFYKVNQGQVLKNKGIIYLDAEQEDEFKIAPGDIRINETNFIKEINVPVRYRQEFTQCPAEEIDFIAVSPIQVISAATSLIPFLEHNDANRALMGSNMQRQAVPLIFPERPLVGTGLEAQIAKDSGIMAISRSNGIVKFTSAEKIIVTDSSNNQITYNLQKYQKSNQETCINHRPIVWPGERIKKGQILADGSATDTGELALGRDVLVAYMPWEGYNYEDAFLISDRLVYEDLYTSIHIEKYEIEARQTKLGPEEITRNIPNVGENSLKQLDENGIVVVSSFVESGSILVGKVTPKGESDQPPESKLLQAIFGEKNKDVKDTSLRLPNGTRGRVVDVRIFSREKGDELAVGINYIVRIYVAQKRKIQIGDKMAGRHGNKGIISKILPRQDMPYLPNGTPVDIILNPLGVPSRMNVGQIFECILGISAFNLKKRFRILPFDEMYESDSSRILINQKLKEAQTLTNLDYLFNENHLGKVALFDGRSGEKFDNPVLVGKIYMMKLVHLVDDKIHSRSTGPYSLVTQQPLGGKAQQGGQRLGEMEVWAFEAFGAAYALQELLTIKSDDIQGRNEALTAIVRGKTIPKPGTPESLKVLMREIQSLGLDIAAYRLPNLHHGEIKSIEIDLTHNKIVQKR.

The protein belongs to the RNA polymerase beta chain family. As to quaternary structure, in plastids the minimal PEP RNA polymerase catalytic core is composed of four subunits: alpha, beta, beta', and beta''. When a (nuclear-encoded) sigma factor is associated with the core the holoenzyme is formed, which can initiate transcription.

It localises to the plastid. Its subcellular location is the chloroplast. The enzyme catalyses RNA(n) + a ribonucleoside 5'-triphosphate = RNA(n+1) + diphosphate. DNA-dependent RNA polymerase catalyzes the transcription of DNA into RNA using the four ribonucleoside triphosphates as substrates. This Cyanidium caldarium (Red alga) protein is DNA-directed RNA polymerase subunit beta.